The chain runs to 343 residues: UPF0283 membrane protein blr7254 (343 aa).

Transmembrane regions (helical) follow at residues 64–84 (GALF…LGVV), 97–117 (LGFV…VVIG), and 214–234 (IVTA…VAAL).

It belongs to the UPF0283 family.

It localises to the cell inner membrane. This Bradyrhizobium diazoefficiens (strain JCM 10833 / BCRC 13528 / IAM 13628 / NBRC 14792 / USDA 110) protein is UPF0283 membrane protein blr7254.